A 290-amino-acid polypeptide reads, in one-letter code: Elongation factor Ts (290 aa).

The segment at 87-90 is involved in Mg(2+) ion dislocation from EF-Tu; sequence TDFV.

This sequence belongs to the EF-Ts family.

It is found in the cytoplasm. In terms of biological role, associates with the EF-Tu.GDP complex and induces the exchange of GDP to GTP. It remains bound to the aminoacyl-tRNA.EF-Tu.GTP complex up to the GTP hydrolysis stage on the ribosome. This chain is Elongation factor Ts (tsf), found in Treponema pallidum (strain Nichols).